Reading from the N-terminus, the 197-residue chain is Recombination protein RecR (197 aa).

The segment at 57–72 (CSICFAITEDDPCAIC) adopts a C4-type zinc-finger fold. The Toprim domain occupies 79 to 174 (GTICVVENSQ…RISRLAHGIP (96 aa)).

This sequence belongs to the RecR family.

Its function is as follows. May play a role in DNA repair. It seems to be involved in an RecBC-independent recombinational process of DNA repair. It may act with RecF and RecO. The sequence is that of Recombination protein RecR from Pelobacter propionicus (strain DSM 2379 / NBRC 103807 / OttBd1).